A 131-amino-acid polypeptide reads, in one-letter code: Universal stress protein C (131 aa).

It belongs to the universal stress protein A family.

Its subcellular location is the cytoplasm. In terms of biological role, required for resistance to DNA-damaging agents. The protein is Universal stress protein C (uspC) of Salmonella typhi.